Consider the following 453-residue polypeptide: Mitochondrial import inner membrane translocase subunit TIM44 (453 aa).

The residue at position 129 (T129) is a Phosphothreonine. An ATP-binding site is contributed by 167 to 174 (GGEKLGKT). K178 is modified (N6-succinyllysine). S181 bears the Phosphoserine mark. An N6-succinyllysine modification is found at K218.

The protein belongs to the Tim44 family. As to quaternary structure, probable component of the PAM complex at least composed of a mitochondrial HSP70 protein, GRPEL1 or GRPEL2, TIMM44, TIMM16/PAM16 and TIMM14/DNAJC19. The complex interacts with the TIMM23 component of the TIM23 complex. Interacts with SLC25A4/ANT1 and SLC25A5/ANT2; leading to inhibit the presequence translocase TIMM23, thereby promoting stabilization of PINK1.

Its subcellular location is the mitochondrion inner membrane. It is found in the mitochondrion matrix. Its function is as follows. Essential component of the PAM complex, a complex required for the translocation of transit peptide-containing proteins from the inner membrane into the mitochondrial matrix in an ATP-dependent manner. Recruits mitochondrial HSP70 to drive protein translocation into the matrix using ATP as an energy source. The chain is Mitochondrial import inner membrane translocase subunit TIM44 (Timm44) from Rattus norvegicus (Rat).